Here is a 349-residue protein sequence, read N- to C-terminus: Glycerol-3-phosphate dehydrogenase [NAD(P)+] (349 aa).

Positions 31, 32, 52, 53, and 126 each coordinate NADPH. Residues Lys-126, Gly-154, and Ser-156 each contribute to the sn-glycerol 3-phosphate site. Ala-158 is an NADPH binding site. Sn-glycerol 3-phosphate contacts are provided by Lys-209, Asp-262, Ser-272, Arg-273, and Asn-274. Lys-209 functions as the Proton acceptor in the catalytic mechanism. Arg-273 is an NADPH binding site. Positions 297 and 299 each coordinate NADPH.

The protein belongs to the NAD-dependent glycerol-3-phosphate dehydrogenase family.

The protein resides in the cytoplasm. The catalysed reaction is sn-glycerol 3-phosphate + NAD(+) = dihydroxyacetone phosphate + NADH + H(+). The enzyme catalyses sn-glycerol 3-phosphate + NADP(+) = dihydroxyacetone phosphate + NADPH + H(+). Its pathway is membrane lipid metabolism; glycerophospholipid metabolism. Its function is as follows. Catalyzes the reduction of the glycolytic intermediate dihydroxyacetone phosphate (DHAP) to sn-glycerol 3-phosphate (G3P), the key precursor for phospholipid synthesis. The chain is Glycerol-3-phosphate dehydrogenase [NAD(P)+] from Clostridium tetani (strain Massachusetts / E88).